The primary structure comprises 544 residues: Pectinesterase 3 (544 aa).

Asn-174, Asn-257, and Asn-291 each carry an N-linked (GlcNAc...) asparagine glycan. Substrate-binding residues include Thr-306 and Gln-336. Catalysis depends on Asp-359, which acts as the Proton donor. Residue Asp-380 is the Nucleophile of the active site. The substrate site is built by Arg-448 and Trp-450. Residue Asn-532 is glycosylated (N-linked (GlcNAc...) asparagine).

It in the N-terminal section; belongs to the PMEI family. The protein in the C-terminal section; belongs to the pectinesterase family.

The protein resides in the secreted. It localises to the cell wall. It catalyses the reaction [(1-&gt;4)-alpha-D-galacturonosyl methyl ester](n) + n H2O = [(1-&gt;4)-alpha-D-galacturonosyl](n) + n methanol + n H(+). It participates in glycan metabolism; pectin degradation; 2-dehydro-3-deoxy-D-gluconate from pectin: step 1/5. Functionally, acts in the modification of cell walls via demethylesterification of cell wall pectin. This Solanum lycopersicum (Tomato) protein is Pectinesterase 3 (PME3).